Here is a 239-residue protein sequence, read N- to C-terminus: Protein LIFEGUARD 2 (239 aa).

7 consecutive transmembrane segments (helical) span residues 41–61 (LLVTIAVAATVVKVHSISVFF), 66–86 (AGFALYILLILTPLIVMCPLY), 96–116 (YLLLGIFTVALAFAVGLTCAF), 121–141 (VILESVILTAVVVISLTLYTF), 156–176 (FLFGAVIVLMVFSFIQILFPL), 179–199 (ISVMIYGCLASIIFCGYIVYD), and 213–233 (IWAAVSLYLDVINLFLSLLTL).

It belongs to the BI1 family. Expressed in seedlings, roots, leaves, inflorescences and flowers.

It is found in the membrane. Regulates the brassinosteroid (BR) signaling pathway that mediates cell elongation and organ morphogenesis. Functionally, (Microbial infection) Facilitates the development of the powdery mildew fungus E.cruciferarum. Its function is as follows. (Microbial infection) May prevent cell death upon A.alternata f.sp. lycopersici (AAL) toxin treatment. The chain is Protein LIFEGUARD 2 from Arabidopsis thaliana (Mouse-ear cress).